We begin with the raw amino-acid sequence, 97 residues long: Co-chaperonin GroES (97 aa).

This sequence belongs to the GroES chaperonin family. Heptamer of 7 subunits arranged in a ring. Interacts with the chaperonin GroEL.

It localises to the cytoplasm. In terms of biological role, together with the chaperonin GroEL, plays an essential role in assisting protein folding. The GroEL-GroES system forms a nano-cage that allows encapsulation of the non-native substrate proteins and provides a physical environment optimized to promote and accelerate protein folding. GroES binds to the apical surface of the GroEL ring, thereby capping the opening of the GroEL channel. This Pseudarthrobacter chlorophenolicus (strain ATCC 700700 / DSM 12829 / CIP 107037 / JCM 12360 / KCTC 9906 / NCIMB 13794 / A6) (Arthrobacter chlorophenolicus) protein is Co-chaperonin GroES.